The primary structure comprises 134 residues: ATP synthase epsilon chain (134 aa).

This sequence belongs to the ATPase epsilon chain family. In terms of assembly, F-type ATPases have 2 components, CF(1) - the catalytic core - and CF(0) - the membrane proton channel. CF(1) has five subunits: alpha(3), beta(3), gamma(1), delta(1), epsilon(1). CF(0) has three main subunits: a, b and c.

It localises to the cell inner membrane. In terms of biological role, produces ATP from ADP in the presence of a proton gradient across the membrane. The polypeptide is ATP synthase epsilon chain (Solibacter usitatus (strain Ellin6076)).